A 229-amino-acid chain; its full sequence is NAD(P)H-hydrate epimerase (229 aa).

The YjeF N-terminal domain occupies 11-222 (YAAADIRAAE…DVGLDLSGAT (212 aa)). 59–63 (NNGGD) serves as a coordination point for (6S)-NADPHX. K(+) contacts are provided by asparagine 60 and aspartate 124. Residues 128 to 136 (GIGTTASPA) and aspartate 164 each bind (6S)-NADPHX. Serine 167 contacts K(+).

The protein belongs to the NnrE/AIBP family. The cofactor is K(+).

The enzyme catalyses (6R)-NADHX = (6S)-NADHX. It catalyses the reaction (6R)-NADPHX = (6S)-NADPHX. Catalyzes the epimerization of the S- and R-forms of NAD(P)HX, a damaged form of NAD(P)H that is a result of enzymatic or heat-dependent hydration. This is a prerequisite for the S-specific NAD(P)H-hydrate dehydratase to allow the repair of both epimers of NAD(P)HX. In Clavibacter sepedonicus (Clavibacter michiganensis subsp. sepedonicus), this protein is NAD(P)H-hydrate epimerase.